A 488-amino-acid chain; its full sequence is GTPase Der (488 aa).

EngA-type G domains are found at residues 3–166 (PVVA…AEAM) and 200–373 (IKLA…DSAT). GTP-binding positions include 9 to 16 (GRPNVGKS), 56 to 60 (DTGGI), 118 to 121 (NKVD), 206 to 213 (GKPNVGKS), 253 to 257 (DTAGV), and 318 to 321 (NKWD). Residues 374–458 (RRVSTSMLTR…PIQLRFHEGD (85 aa)) enclose the KH-like domain.

The protein belongs to the TRAFAC class TrmE-Era-EngA-EngB-Septin-like GTPase superfamily. EngA (Der) GTPase family. In terms of assembly, associates with the 50S ribosomal subunit.

GTPase that plays an essential role in the late steps of ribosome biogenesis. In Shewanella amazonensis (strain ATCC BAA-1098 / SB2B), this protein is GTPase Der.